We begin with the raw amino-acid sequence, 350 residues long: Phosphotriesterase-related protein (350 aa).

A divalent metal cation is bound by residues H22, H24, E169, H201, H230, and D298.

The protein belongs to the metallo-dependent hydrolases superfamily. Phosphotriesterase family. The cofactor is a divalent metal cation.

The sequence is that of Phosphotriesterase-related protein from Drosophila melanogaster (Fruit fly).